A 173-amino-acid chain; its full sequence is MKSKKIFKILTLLLPMITTFSCSFPKNKLNSNNVDTFYEQETNKSKQQLTNFSEDNFDETLEKLKKGNTIYFPFNNHQVNSKYAKNLNDLAQFLCHHSNQKIMIEGHTDSRGTNKYNMYLGQKRADSVKLYLESKGVSNQQITTVSYGSSKPVAHGNKENSYSKNRRSVIIYQ.

Residues 1–21 (MKSKKIFKILTLLLPMITTFS) form the signal peptide. The N-palmitoyl cysteine moiety is linked to residue Cys-22. A lipid anchor (S-diacylglycerol cysteine) is attached at Cys-22. Residues 59-173 (ETLEKLKKGN…KNRRSVIIYQ (115 aa)) form the OmpA-like domain.

This sequence belongs to the Pal lipoprotein family.

The protein resides in the cell outer membrane. The protein is Peptidoglycan-associated lipoprotein of Buchnera aphidicola subsp. Baizongia pistaciae (strain Bp).